The following is a 337-amino-acid chain: Large ribosomal subunit protein uL3 (337 aa).

The interval 1–26 is disordered; the sequence is MGHAHAPRRGSLGYSPRVRARSQKPK.

It belongs to the universal ribosomal protein uL3 family. In terms of assembly, part of the 50S ribosomal subunit. Forms a cluster with proteins L14 and L24e.

Functionally, one of the primary rRNA binding proteins, it binds directly near the 3'-end of the 23S rRNA, where it nucleates assembly of the 50S subunit. The polypeptide is Large ribosomal subunit protein uL3 (Methanocella arvoryzae (strain DSM 22066 / NBRC 105507 / MRE50)).